A 458-amino-acid polypeptide reads, in one-letter code: RuvB-like helicase 1 (458 aa).

71–78 (GGPGTGKT) serves as a coordination point for ATP.

It belongs to the RuvB family. As to quaternary structure, may form heterododecamers with hel-2/rvb2. Component of the SWR1 chromatin remodeling complex, the INO80 chromatin remodeling complex, and of the R2TP complex.

It localises to the nucleus. The enzyme catalyses ATP + H2O = ADP + phosphate + H(+). In terms of biological role, DNA helicase which participates in several chromatin remodeling complexes, including the SWR1 and the INO80 complexes. The SWR1 complex mediates the ATP-dependent exchange of histone H2A for the H2A variant H2A.Z leading to transcriptional regulation of selected genes by chromatin remodeling. The INO80 complex remodels chromatin by shifting nucleosomes and is involved in DNA repair. Also involved in pre-rRNA processing. In Neurospora crassa (strain ATCC 24698 / 74-OR23-1A / CBS 708.71 / DSM 1257 / FGSC 987), this protein is RuvB-like helicase 1 (hel-1).